Here is a 449-residue protein sequence, read N- to C-terminus: 3-phosphoshikimate 1-carboxyvinyltransferase (449 aa).

Lys28, Ser29, and Arg33 together coordinate 3-phosphoshikimate. Residue Lys28 coordinates phosphoenolpyruvate. Residues Gly105 and Arg133 each coordinate phosphoenolpyruvate. Residues Ser179, Gln181, Asp332, and Lys359 each contribute to the 3-phosphoshikimate site. Residue Gln181 participates in phosphoenolpyruvate binding. The active-site Proton acceptor is the Asp332. Phosphoenolpyruvate is bound by residues Arg363 and Arg406.

The protein belongs to the EPSP synthase family. Monomer.

The protein resides in the cytoplasm. It catalyses the reaction 3-phosphoshikimate + phosphoenolpyruvate = 5-O-(1-carboxyvinyl)-3-phosphoshikimate + phosphate. The protein operates within metabolic intermediate biosynthesis; chorismate biosynthesis; chorismate from D-erythrose 4-phosphate and phosphoenolpyruvate: step 6/7. Catalyzes the transfer of the enolpyruvyl moiety of phosphoenolpyruvate (PEP) to the 5-hydroxyl of shikimate-3-phosphate (S3P) to produce enolpyruvyl shikimate-3-phosphate and inorganic phosphate. This is 3-phosphoshikimate 1-carboxyvinyltransferase from Nitrobacter hamburgensis (strain DSM 10229 / NCIMB 13809 / X14).